A 213-amino-acid polypeptide reads, in one-letter code: Probable D-methionine transport system permease protein MetI (213 aa).

The ABC transmembrane type-1 domain maps to 9–202 (TYETVYISFA…VLFVMISQKL (194 aa)). 5 helical membrane passes run 13–33 (VYIS…VGIW), 50–72 (FVLN…LILL), 89–109 (IIPL…NALM), 139–159 (LPTL…YSAM), and 183–203 (YVTW…QKLG).

Belongs to the binding-protein-dependent transport system permease family. CysTW subfamily.

The protein localises to the cell inner membrane. Functionally, part of the binding-protein-dependent transport system for D-methionine. Probably responsible for the translocation of the substrate across the membrane. This chain is Probable D-methionine transport system permease protein MetI (metI), found in Haemophilus influenzae (strain ATCC 51907 / DSM 11121 / KW20 / Rd).